The following is a 91-amino-acid chain: Small ribosomal subunit protein uS19 (91 aa).

This sequence belongs to the universal ribosomal protein uS19 family.

In terms of biological role, protein S19 forms a complex with S13 that binds strongly to the 16S ribosomal RNA. The polypeptide is Small ribosomal subunit protein uS19 (Desulfotalea psychrophila (strain LSv54 / DSM 12343)).